Reading from the N-terminus, the 439-residue chain is SH3 domain-containing protein 1 (439 aa).

In terms of domain architecture, BAR spans 32-263; that stretch reads DAVVVDEEEL…MIAEEEAIGS (232 aa). Residues 277–291 are compositionally biased toward polar residues; it reads SLPQQEPNSNSSGEI. The interval 277–362 is disordered; the sequence is SLPQQEPNSN…SDDHHNHQLL (86 aa). Positions 318–358 are enriched in basic and acidic residues; sequence SPKDEMKSSPQEETKSNHQKEIKSSPQEEIKKSNGSDDHHN. The SH3 domain maps to 366–425; it reads DSYFLAKVVHPFDAQAPGELSLAVDDYVIVRQVAGTGWSEGEYKGKAGWFPSAYVEKQEK.

As to quaternary structure, interacts with the auxilin-like protein AUXI1. In terms of tissue distribution, highly expressed in flowers. Detected in seedlings, roots, leaves and stems.

It localises to the cytoplasmic vesicle. The protein localises to the clathrin-coated vesicle. It is found in the cell membrane. The protein resides in the golgi apparatus. Its subcellular location is the trans-Golgi network. It localises to the endoplasmic reticulum. Functionally, lipid binding protein bound strongly to phosphatidic acid, phosphatidylinositol-4-phosphate and phosphatidylinositol-4,5-bisphosphate. Binds actin in vitro. Involved in trafficking and modification of clathrin-coated vesicles. This Arabidopsis thaliana (Mouse-ear cress) protein is SH3 domain-containing protein 1 (SH3P1).